We begin with the raw amino-acid sequence, 53 residues long: UPF0391 membrane protein KPK_4780 (53 aa).

2 helical membrane-spanning segments follow: residues 4 to 24 (WGIIFLVIALIAAALGFGGLA) and 30 to 47 (AAKIVFVVGIILFLVSLF).

This sequence belongs to the UPF0391 family.

The protein resides in the cell membrane. The protein is UPF0391 membrane protein KPK_4780 of Klebsiella pneumoniae (strain 342).